A 236-amino-acid polypeptide reads, in one-letter code: Phosphoribosylaminoimidazole-succinocarboxamide synthase (236 aa).

This sequence belongs to the SAICAR synthetase family.

The enzyme catalyses 5-amino-1-(5-phospho-D-ribosyl)imidazole-4-carboxylate + L-aspartate + ATP = (2S)-2-[5-amino-1-(5-phospho-beta-D-ribosyl)imidazole-4-carboxamido]succinate + ADP + phosphate + 2 H(+). The protein operates within purine metabolism; IMP biosynthesis via de novo pathway; 5-amino-1-(5-phospho-D-ribosyl)imidazole-4-carboxamide from 5-amino-1-(5-phospho-D-ribosyl)imidazole-4-carboxylate: step 1/2. The sequence is that of Phosphoribosylaminoimidazole-succinocarboxamide synthase from Rickettsia africae (strain ESF-5).